Consider the following 268-residue polypeptide: DNA ligase (268 aa).

Lys-41 acts as the N6-AMP-lysine intermediate in catalysis. Positions 111, 181, and 187 each coordinate ATP.

It belongs to the ATP-dependent DNA ligase family. Requires a divalent metal cation as cofactor.

It carries out the reaction ATP + (deoxyribonucleotide)n-3'-hydroxyl + 5'-phospho-(deoxyribonucleotide)m = (deoxyribonucleotide)n+m + AMP + diphosphate.. Its function is as follows. Catalyzes efficient strand joining on a single nicked DNA. The chain is DNA ligase (ligA) from Haemophilus influenzae (strain ATCC 51907 / DSM 11121 / KW20 / Rd).